Reading from the N-terminus, the 360-residue chain is Teichoic acids export ATP-binding protein TagH (360 aa).

Residues 24–245 (LKAMFFPKTR…YEDYINWFNK (222 aa)) form the ABC transporter domain. 59–66 (GINGSGKS) contributes to the ATP binding site. The segment at 246 to 360 (LSKEEKEAHK…GDIDNSDVSL (115 aa)) is unknown. The segment at 270-290 (EEQENGKAGSGGDGTQPIVQP) is disordered.

It belongs to the ABC transporter superfamily. Teichoic acids exporter (TC 3.A.1.104.1) family. In terms of assembly, the complex is composed of two ATP-binding proteins (TagH) and two transmembrane proteins (TagG).

The protein resides in the cell membrane. The enzyme catalyses ATP + H2O + teichoic acidSide 1 = ADP + phosphate + teichoic acidSide 2.. Its function is as follows. Part of the ABC transporter complex TagGH involved in teichoic acids export. Responsible for energy coupling to the transport system. The protein is Teichoic acids export ATP-binding protein TagH of Shouchella clausii (strain KSM-K16) (Alkalihalobacillus clausii).